Here is a 475-residue protein sequence, read N- to C-terminus: MSYRTRFGKDNSACDSGNAVEGSGSSKGPNEVSNDFDHEIAQLTKHRSRPHQLLSQDMPGKSRLLVSTMKMLVGRESNHSGRGRFSSADGCHVLSRYLPINGPWGVDQSTSPAYVSQFSNDGLFFVAGFQGGHIRIYNVDKGWKVQKDILTKSLRWTITDTSLSPDQRYLVYASMTPIVNIVNVGSSMTESLANVTEIHEGLDFSVGGDEDEFGIFSVRFSTDGRELVAASRDASIYVYDLQANKVNLRIPAHSSDVNTVCFADETGHLIYSGSDDNLCKVWDRRCFNHKGQPAGVLMGHLEGVTFIDSRGDGRYFISNGKDQTTQLWDIRKMSSRAMYSPRLRDHDWDYRWMEYPAHAKTLKHPNDQSLATYRGHGVLRTLIRCYLSPAYSTGQKYIYTGSSDHCVYIYDLVTGAQVARLNHHEGPVRDCSWHPLYPMLVSSSWDGTIARWEFPGDDQVPTLERPRARRKERLL.

Residues 1–34 (MSYRTRFGKDNSACDSGNAVEGSGSSKGPNEVSN) are disordered. Polar residues predominate over residues 23–33 (SGSSKGPNEVS). WD repeat units lie at residues 211 to 240 (DEFG…YVYD), 252 to 283 (AHSS…KVWD), 299 to 329 (GHLE…QLWD), 375 to 411 (GHGV…YIYD), and 423 to 453 (HHEG…ARWE).

Belongs to the WD repeat LEC14B family.

The protein is LEC14B homolog of Prunus armeniaca (Apricot).